The primary structure comprises 407 residues: Argininosuccinate synthase (407 aa).

ATP is bound by residues 16 to 24 and Ala-44; that span reads AYSGGLDTS. 2 residues coordinate L-citrulline: Tyr-96 and Ser-101. ATP is bound at residue Gly-126. The L-aspartate site is built by Thr-128, Asn-132, and Asp-133. Asn-132 is a binding site for L-citrulline. The L-citrulline site is built by Arg-136, Ser-185, Ser-194, Glu-270, and Tyr-282.

Belongs to the argininosuccinate synthase family. Type 1 subfamily. In terms of assembly, homotetramer.

It is found in the cytoplasm. The catalysed reaction is L-citrulline + L-aspartate + ATP = 2-(N(omega)-L-arginino)succinate + AMP + diphosphate + H(+). The protein operates within amino-acid biosynthesis; L-arginine biosynthesis; L-arginine from L-ornithine and carbamoyl phosphate: step 2/3. In Shewanella sp. (strain ANA-3), this protein is Argininosuccinate synthase.